The primary structure comprises 36 residues: uncharacterized protein (36 aa).

The segment covering 1–14 has biased composition (polar residues); the sequence is MNQLGSGPTKQGVA. Positions 1-36 are disordered; that stretch reads MNQLGSGPTKQGVATNTGSTGTTKNNSNLSGKGWVL. Positions 15-36 are enriched in low complexity; that stretch reads TNTGSTGTTKNNSNLSGKGWVL.

This is an uncharacterized protein from Dictyostelium discoideum (Social amoeba).